Here is a 1774-residue protein sequence, read N- to C-terminus: U3 small nucleolar RNA-associated protein 10 (1774 aa).

Positions 1206–1226 (YDKHSSAGSNDEEAGSESEAE) are disordered. Positions 1215–1226 (NDEEAGSESEAE) are enriched in acidic residues. One copy of the HEAT repeat lies at 1734–1772 (LVPIIAELLEDEDEEVEYEVRSGLVKVVESVMGEPFDRY).

This sequence belongs to the HEATR1/UTP10 family. In terms of assembly, component of the ribosomal small subunit (SSU) processome.

Its subcellular location is the nucleus. It localises to the nucleolus. Its function is as follows. Involved in nucleolar processing of pre-18S ribosomal RNA. Involved in ribosome biosynthesis. The sequence is that of U3 small nucleolar RNA-associated protein 10 from Kluyveromyces lactis (strain ATCC 8585 / CBS 2359 / DSM 70799 / NBRC 1267 / NRRL Y-1140 / WM37) (Yeast).